Consider the following 1620-residue polypeptide: DNA (cytosine-5)-methyltransferase 1 (1620 aa).

The interval 1 to 21 (MPARTAPARVPALASPAGSLP) is disordered. The interval 1 to 120 (MPARTAPARV…SRPTWRAEMA (120 aa)) is interaction with DMAP1. The interval 1 to 145 (MPARTAPARV…RRSKSDSDTL (145 aa)) is interaction with DNMT3A. 2 interaction with the PRC2/EED-EZH2 complex regions span residues 1 to 343 (MPAR…SERK) and 305 to 609 (APET…RVMG). S15 carries the phosphoserine modification. The region spanning 16-109 (PAGSLPDHVR…TQKANGCPAN (94 aa)) is the DMAP1-binding domain. K70 bears the N6,N6-dimethyllysine; by EHMT2 mark. Positions 96-369 (THTLTQKANG…PECGQHLDDP (274 aa)) are disordered. Basic residues predominate over residues 126–137 (PRSRPKPRGPRR). A Phosphoserine modification is found at S138. K139 is modified (N6-methyllysine; by SETD7). S140 is modified (phosphoserine). Residues 144-155 (TLSVETSPSSVA) show a composition bias toward polar residues. S146 is subject to Phosphoserine; by CK1. The interval 147–217 (VETSPSSVAT…SGAAAAVEKL (71 aa)) is interaction with DNMT3B. Phosphoserine occurs at positions 150 and 152. An interaction with PCNA region spans residues 161–172 (RQTTITAHFTKG). T164 carries the post-translational modification Phosphothreonine. At K171 the chain carries N6-acetyllysine. The Nuclear localization signal motif lies at 175–202 (KRKPKEESEEGNSAESAAEERDQDKKRR). A compositionally biased stretch (basic and acidic residues) spans 192-205 (AEERDQDKKRRVVD). S240 carries the post-translational modification Phosphoserine. 2 stretches are compositionally biased toward basic and acidic residues: residues 246 to 267 (RELS…PETH) and 286 to 300 (QPRD…KEAE). At K255 the chain carries N6-acetyllysine; alternate. K255 is covalently cross-linked (Glycyl lysine isopeptide (Lys-Gly) (interchain with G-Cter in SUMO2); alternate). A compositionally biased stretch (acidic residues) spans 308–317 (TPEDRDEDER). The segment at 328 to 556 (KLESHTVPVQ…NVNRFTEDSL (229 aa)) is DNA replication foci-targeting sequence. Residues C359 and C362 each contribute to the Zn(2+) site. K372 bears the N6-acetyllysine mark. Zn(2+) contacts are provided by C420 and H424. S515 and S555 each carry phosphoserine. The CXXC-type zinc finger occupies 649 to 695 (NAMKRRRCGVCEVCQQPECGKCKACKDMVKFGGTGRSKQACLKRRCP). Zn(2+) contacts are provided by C656, C659, C662, C667, C670, C673, C689, and C694. Positions 696–757 (NLAVKEADDD…TYYQKVSIDE (62 aa)) are autoinhibitory linker. The tract at residues 696-813 (NLAVKEADDD…TDTVLGATSD (118 aa)) is interaction with HDAC1. Residues 702–713 (ADDDEEADDDVS) show a composition bias toward acidic residues. The segment at 702–732 (ADDDEEADDDVSEMPSPKKLHQGKKKKQNKD) is disordered. 2 positions are modified to phosphoserine: S713 and S717. Over residues 719–730 (KKLHQGKKKKQN) the composition is skewed to basic residues. At S735 the chain carries Phosphoserine. At K752 the chain carries N6-acetyllysine. Positions 758 to 884 (EMLEVGDCVS…QEYARFESPP (127 aa)) constitute a BAH 1 domain. S882 is subject to Phosphoserine. N6-acetyllysine occurs at positions 895, 961, 965, and 979. A BAH 2 domain is found at 976–1103 (HYRKYSDYIK…SKTKNFEDPP (128 aa)). The disordered stretch occupies residues 1097-1136 (KNFEDPPNHARSPGNKGKGKGKGKGKGKHQVSEPKEPEAA). Tandem repeats lie at residues 1112–1113 (KG), 1114–1115 (KG), 1116–1117 (KG), 1118–1119 (KG), 1120–1121 (KG), and 1122–1123 (KG). A 7 X 2 AA tandem repeats of K-G region spans residues 1112–1125 (KGKGKGKGKGKGKH). The span at 1113 to 1125 (GKGKGKGKGKGKH) shows a compositional bias: basic residues. K1114, K1116, K1118, K1120, K1122, and K1124 each carry N6-acetyllysine. One copy of the 7; approximate repeat lies at 1124–1125 (KH). The tract at residues 1124–1620 (KHQVSEPKEP…KAKEEAATKD (497 aa)) is interaction with the PRC2/EED-EZH2 complex. A compositionally biased stretch (basic and acidic residues) spans 1126–1135 (QVSEPKEPEA). The 460-residue stretch at 1142–1601 (LRTLDVFSGC…LEIKLCLLSS (460 aa)) folds into the SAM-dependent MTase C5-type domain. The catalytic stretch occupies residues 1142–1620 (LRTLDVFSGC…KAKEEAATKD (479 aa)). Residues S1149, 1153 to 1154 (GL), 1171 to 1172 (EM), and 1193 to 1194 (DC) contribute to the S-adenosyl-L-methionine site. Residue C1229 is part of the active site. N6-acetyllysine occurs at positions 1352 and 1418. V1582 contributes to the S-adenosyl-L-methionine binding site. K1611 is covalently cross-linked (Glycyl lysine isopeptide (Lys-Gly) (interchain with G-Cter in SUMO2)).

Belongs to the class I-like SAM-binding methyltransferase superfamily. C5-methyltransferase family. Homodimer. Forms a stable complex with E2F1, BB1 and HDAC1. Forms a complex with DMAP1 and HDAC2, with direct interaction. Interacts with the PRC2/EED-EZH2 complex. Probably part of a corepressor complex containing ZNF304, TRIM28, SETDB1 and DNMT1. Interacts with UHRF1; promoting its recruitment to hemimethylated DNA. Interacts with USP7, promoting its deubiquitination. Interacts with BAZ2A/TIP5. Interacts with PCNA. Interacts with MBD2 and MBD3. Interacts with DNMT3A and DNMT3B. Interacts with UBC9. Interacts with HDAC1. Interacts with CSNK1D. Interacts with SIRT7. Interacts with ZNF263; recruited to the SIX3 promoter along with other proteins involved in chromatin modification and transcriptional corepression where it contributes to transcriptional repression. Interacts with L3MBTL3 and DCAF5; the interaction requires DNMT1 methylation at Lys-139 and is necessary to target DNMT1 for ubiquitination by the CRL4-DCAF5 E3 ubiquitin ligase complex and proteasomal degradation. Interacts with PHF20L1; the interaction requires DNMT1 methylation at Lys-139 and protects DNMT1 from ubiquitination and proteasomal degradation. Post-translationally, sumoylated; sumoylation increases activity. Phosphorylation at Ser-146 by CK1 reduces DNA-binding activity. In terms of processing, acetylation on multiple lysines, mainly by KAT2B/PCAF, regulates cell cycle G(2)/M transition. Deacetylation of Lys-1352 and Lys-1418 by SIRT1 increases methyltransferase activity. Post-translationally, phosphorylation of Ser-152 by CDKs is important for enzymatic activity and protein stability. Phosphorylation of Ser-140 by AKT1 prevents methylation by SETD7 thereby increasing DNMT1 stability. Methylation at Lys-139 by SETD7 is necessary for the regulation of DNMT1 proteasomal degradation. In terms of processing, ubiquitinated by UHRF1; interaction with USP7 counteracts ubiquitination by UHRF1 by promoting deubiquitination and preventing degradation by the proteasome. In terms of tissue distribution, isoform 1 is expressed in embryonic stem cells and in somatic tissues. Isoform 2 is expressed in oocytes, preimplantation embryos, testis and in skeletal muscle during myogenesis.

It is found in the nucleus. The protein localises to the cytoplasm. It catalyses the reaction a 2'-deoxycytidine in DNA + S-adenosyl-L-methionine = a 5-methyl-2'-deoxycytidine in DNA + S-adenosyl-L-homocysteine + H(+). With respect to regulation, allosterically regulated. The binding of 5-methylcytosine-containing DNA to the N-terminal parts of DNMT1 causes an allosteric activation of the catalytic domain by a direct interaction of its Zn-binding domain with the catalytic domain. Its function is as follows. Methylates CpG residues. Preferentially methylates hemimethylated DNA. Associates with DNA replication sites in S phase maintaining the methylation pattern in the newly synthesized strand, that is essential for epigenetic inheritance. Associates with chromatin during G2 and M phases to maintain DNA methylation independently of replication. It is responsible for maintaining methylation patterns established in development. DNA methylation is coordinated with methylation of histones. Mediates transcriptional repression by direct binding to HDAC2. In association with DNMT3B and via the recruitment of CTCFL/BORIS, involved in activation of BAG1 gene expression by modulating dimethylation of promoter histone H3 at H3K4 and H3K9. Probably forms a corepressor complex required for activated KRAS-mediated promoter hypermethylation and transcriptional silencing of tumor suppressor genes (TSGs) or other tumor-related genes in colorectal cancer (CRC) cells. Also required to maintain a transcriptionally repressive state of genes in undifferentiated embryonic stem cells (ESCs). Associates at promoter regions of tumor suppressor genes (TSGs) leading to their gene silencing. Promotes tumor growth. The protein is DNA (cytosine-5)-methyltransferase 1 (Dnmt1) of Mus musculus (Mouse).